We begin with the raw amino-acid sequence, 562 residues long: O-fucosyltransferase 4 (562 aa).

The disordered stretch occupies residues 10–46 (SIQNRLPGSDHTTPSPPTSPHLCRSRSKSSSVSGQQQ). The segment covering 37–46 (KSSSVSGQQQ) has biased composition (low complexity). The helical; Signal-anchor for type II membrane protein transmembrane segment at 67–87 (GILLFAPIIYISCMLFHLHAA) threads the bilayer. N-linked (GlcNAc...) asparagine glycosylation is found at asparagine 122, asparagine 146, asparagine 185, and asparagine 239. 332 to 334 (HLR) is a binding site for substrate. N-linked (GlcNAc...) asparagine glycans are attached at residues asparagine 404, asparagine 420, asparagine 450, and asparagine 555.

The protein belongs to the glycosyltransferase GT106 family.

The protein resides in the membrane. The protein operates within glycan metabolism. The protein is O-fucosyltransferase 4 of Arabidopsis thaliana (Mouse-ear cress).